Consider the following 173-residue polypeptide: Bifunctional protein PyrR (173 aa).

The PRPP-binding signature appears at 93-105; it reads VILVDDVLYTGRT.

Belongs to the purine/pyrimidine phosphoribosyltransferase family. PyrR subfamily. In terms of assembly, homodimer and homohexamer; in equilibrium.

It catalyses the reaction UMP + diphosphate = 5-phospho-alpha-D-ribose 1-diphosphate + uracil. Regulates transcriptional attenuation of the pyrimidine nucleotide (pyr) operon by binding in a uridine-dependent manner to specific sites on pyr mRNA. This disrupts an antiterminator hairpin in the RNA and favors formation of a downstream transcription terminator, leading to a reduced expression of downstream genes. In terms of biological role, also displays a weak uracil phosphoribosyltransferase activity which is not physiologically significant. In Streptococcus uberis (strain ATCC BAA-854 / 0140J), this protein is Bifunctional protein PyrR.